A 59-amino-acid chain; its full sequence is UPF0509 protein KPK_3153 (59 aa).

It belongs to the UPF0509 family.

In Klebsiella pneumoniae (strain 342), this protein is UPF0509 protein KPK_3153.